The primary structure comprises 209 residues: BAG family molecular chaperone regulator 1 (209 aa).

Positions 7–84 constitute a Ubiquitin-like domain; sequence CSSVQTIVDI…IIVMGGKNAM (78 aa). One can recognise a BAG domain in the interval 107-193; sequence TYDVNLKDVA…TLLNQNDALL (87 aa).

In terms of assembly, homodimer or homotetramer.

May inhibit the chaperone activity of HSP70/HSC70 by promoting substrate release in an ATP-dependent manner. The sequence is that of BAG family molecular chaperone regulator 1 (bag-1) from Caenorhabditis briggsae.